The chain runs to 135 residues: MMFNIYLFVTFFSTILAGSLSDLEIGIIKRIPVEDCLIKAMPGDKVKVHYTGSLLESGTVFDSSYSRGSPIAFELGVGRVIKGWDQGVAGMCVGEKRKLQIPSSLAYGERGVPGVIPPSADLVFDVELVDVKSAA.

The N-terminal stretch at 1–17 is a signal peptide; the sequence is MMFNIYLFVTFFSTILA. In terms of domain architecture, PPIase FKBP-type spans 43 to 132; the sequence is GDKVKVHYTG…VFDVELVDVK (90 aa).

It belongs to the FKBP-type PPIase family. FKBP2 subfamily.

The protein localises to the endoplasmic reticulum membrane. It carries out the reaction [protein]-peptidylproline (omega=180) = [protein]-peptidylproline (omega=0). Its activity is regulated as follows. Inhibited by both FK506 and rapamycin. Binds FK506 with 15-fold lower affinity than FKB1. Its function is as follows. PPIases accelerate the folding of proteins. It catalyzes the cis-trans isomerization of proline imidic peptide bonds in oligopeptides. FKBP-13 may play a role in protein trafficking in the ER. This Saccharomyces cerevisiae (strain ATCC 204508 / S288c) (Baker's yeast) protein is Peptidyl-prolyl cis-trans isomerase FPR2 (FPR2).